Here is a 105-residue protein sequence, read N- to C-terminus: Large ribosomal subunit protein uL24 (105 aa).

This sequence belongs to the universal ribosomal protein uL24 family. Part of the 50S ribosomal subunit.

Functionally, one of two assembly initiator proteins, it binds directly to the 5'-end of the 23S rRNA, where it nucleates assembly of the 50S subunit. Its function is as follows. One of the proteins that surrounds the polypeptide exit tunnel on the outside of the subunit. This Acinetobacter baumannii (strain AB307-0294) protein is Large ribosomal subunit protein uL24.